The following is a 722-amino-acid chain: Dipeptidyl aminopeptidase BII (722 aa).

The first 24 residues, 1–24, serve as a signal peptide directing secretion; it reads MRPNLLAAAIAVPLSLLAAQIAQA. 2 disulfide bridges follow: C70–C87 and C166–C174. H86 (charge relay system) is an active-site residue. 215 to 216 lines the substrate pocket; sequence NW. D224 (charge relay system) is an active-site residue. Residues N330, 655–657, and 673–674 contribute to the substrate site; these read GNS and FD. Catalysis depends on S657, which acts as the Charge relay system.

This sequence belongs to the peptidase S46 family. Homodimer.

Its activity is regulated as follows. Completely inhibited by the serine protease inhibitor diisopropyl fluorophosphate (DFP) and potently inhibited by 0.5 mM ZnCl(2), 10 mM o-phenanthlorine, phenylmethanesulfonyl fluoride (PMSF) and N-tosyl-L-phenyl-alanyl chloromethyl ketone (TPCK), but not by N-tosyl-L-lysyl chloromethyl ketone (TLCK). Activity is not affected significantly by protease inhibitors, such as chymostatin, leupeptin, N-ethylmaleimide (NEM), iodoacetate (IAA), L-trans-epoxysuccinyl-leucylamido(4-guanido)butane (E64) and pepstatin A or by CoCl(2), CaCl(2) and EDTA. Functionally, exopeptidase that catalyzes the removal of dipeptide units (NH2-P2-P1-) from the free amino termini of oligopeptides and small proteins. Peptide digestion is sequential and substrate recognition is non-specific, with the exception that Pro is not suitable as a P1 residue. Removes many residues of bioactive oligopeptides such as angiotensin I and neuromedin N and also cleaves oxidized insulin B chain. Able to hydrolyze an X-Pro bond, an imido bond. No endopeptidase activity. May play a physiological role in feeding. The polypeptide is Dipeptidyl aminopeptidase BII (Pseudoxanthomonas mexicana).